We begin with the raw amino-acid sequence, 1897 residues long: Spectinabilin polyketide synthase system protein NorA (1897 aa).

The region spanning 112–536 is the Ketosynthase family 3 (KS3) domain; it reads EEPIAIVGMG…GTNAHIILEQ (425 aa). Active-site for beta-ketoacyl synthase activity residues include C283, H418, and H458. The disordered stretch occupies residues 538-563; that stretch reads APEPERPHAPEADGEPRPLPWPVSGH. The span at 540 to 553 shows a compositional bias: basic and acidic residues; the sequence is EPERPHAPEADGEP. Residues 644-962 enclose the Malonyl-CoA:ACP transacylase (MAT) domain; the sequence is FVFPGQGSQW…VAEAHVHGVA (319 aa). The segment at 1012–1139 is N-terminal hotdog fold; it reads HPLLGAAIPL…GTLAPGGGHP (128 aa). The region spanning 1012–1289 is the PKS/mFAS DH domain; sequence HPLLGAAIPL…MRPVTAEALH (278 aa). Catalysis depends on H1045, which acts as the Proton acceptor; for dehydratase activity. Residues 1113 to 1152 are disordered; the sequence is SRPEDAGADEPWTRHAEGTLAPGGGHPRQDPGPWPPTGAR. Positions 1151-1289 are C-terminal hotdog fold; sequence AREIDLDDCY…MRPVTAEALH (139 aa). Catalysis depends on D1211, which acts as the Proton donor; for dehydratase activity. The region spanning 1494–1671 is the Ketoreductase (KR) domain; it reads GTVLVTGGLG…GVSMGWGMWA (178 aa). One can recognise a Carrier domain in the interval 1777–1852; it reads ALLLGVVRGH…ALSRYLRTLL (76 aa). Residue S1812 is modified to O-(pantetheine 4'-phosphoryl)serine. The disordered stretch occupies residues 1854–1873; the sequence is PDPAPAPTAPDGQPGPDQAD. Low complexity predominate over residues 1862 to 1871; it reads APDGQPGPDQ.

The spectinabilin polyketide synthase complex is composed of 4 proteins, NorA, NorA', NorB and NorC. The complex comprises 6 modules with a total of 28 catalytic domains catalyzing 7 chain elongations. NorA comprises one module, NorA' two modules, NorB one module and NorC two modules. Pantetheine 4'-phosphate is required as a cofactor.

The enzyme catalyses 4-nitrobenzoyl-CoA + 6 (S)-methylmalonyl-CoA + malonyl-CoA + 6 NADPH + 12 H(+) = demethyldeoxyspectinabilin + 7 CO2 + 6 NADP(+) + 8 CoA + 5 H2O. The protein operates within antibiotic biosynthesis. It functions in the pathway polyketide biosynthesis. Functionally, component of a type I modular polyketide synthase (PKS) that generates the backbone of the antibiotic spectinabilin (also known as neoaureothin), a nitroaryl-substituted polyketide metabolite. This PKS system accepts the unusual starter unit 4-nitrobenzoyl-CoA and extends it by 6 molecules of (S)-methylmalonyl-CoA and a single molecule of malonyl-CoA. The first module, NorA, is used twice in an iterative fashion. The protein is Spectinabilin polyketide synthase system protein NorA of Streptomyces orinoci (Streptoverticillium orinoci).